An 89-amino-acid polypeptide reads, in one-letter code: Large ribosomal subunit protein bL27 (89 aa).

Belongs to the bacterial ribosomal protein bL27 family.

The chain is Large ribosomal subunit protein bL27 from Bacteroides thetaiotaomicron (strain ATCC 29148 / DSM 2079 / JCM 5827 / CCUG 10774 / NCTC 10582 / VPI-5482 / E50).